The primary structure comprises 57 residues: UPF0391 membrane protein bsl6560 (57 aa).

2 consecutive transmembrane segments (helical) span residues W4–A24 and I30–L50.

This sequence belongs to the UPF0391 family.

The protein localises to the cell membrane. The protein is UPF0391 membrane protein bsl6560 of Bradyrhizobium diazoefficiens (strain JCM 10833 / BCRC 13528 / IAM 13628 / NBRC 14792 / USDA 110).